The chain runs to 108 residues: UPF0145 protein alr2488 (108 aa).

It belongs to the UPF0145 family.

The chain is UPF0145 protein alr2488 from Nostoc sp. (strain PCC 7120 / SAG 25.82 / UTEX 2576).